The sequence spans 1172 residues: DNA-directed RNA polymerase subunit beta (1172 aa).

Belongs to the RNA polymerase beta chain family. In terms of assembly, the RNAP catalytic core consists of 2 alpha, 1 beta, 1 beta' and 1 omega subunit. When a sigma factor is associated with the core the holoenzyme is formed, which can initiate transcription.

It carries out the reaction RNA(n) + a ribonucleoside 5'-triphosphate = RNA(n+1) + diphosphate. DNA-dependent RNA polymerase catalyzes the transcription of DNA into RNA using the four ribonucleoside triphosphates as substrates. In Mycobacterium sp. (strain JLS), this protein is DNA-directed RNA polymerase subunit beta.